The sequence spans 90 residues: Bombyxin B-9 (90 aa).

The first 20 residues, 1-20, serve as a signal peptide directing secretion; the sequence is MMKTAVMFILVVVISLTYSS. 3 disulfides stabilise this stretch: Cys30/Cys75, Cys42/Cys88, and Cys74/Cys79. A propeptide spans 49–64 (c peptide like); it reads GGAQYAPYWQETYLRS.

The protein belongs to the insulin family. As to quaternary structure, heterodimer of a B chain and an A chain linked by two disulfide bonds.

It localises to the secreted. In terms of biological role, brain peptide responsible for activation of prothoracic glands to produce ecdysone in insects. In Bombyx mori (Silk moth), this protein is Bombyxin B-9 (BBXB9).